Here is a 391-residue protein sequence, read N- to C-terminus: Chaperone protein DnaJ (391 aa).

The 66-residue stretch at 2–67 (DYYDVLGVSK…QKRESYDRYG (66 aa)) folds into the J domain. Residues 148-226 (GVKKELLVSG…CRGQGRIKDK (79 aa)) form a CR-type zinc finger. Cysteine 161, cysteine 164, cysteine 178, cysteine 181, cysteine 200, cysteine 203, cysteine 214, and cysteine 217 together coordinate Zn(2+). 4 CXXCXGXG motif repeats span residues 161–168 (CETCSGSG), 178–185 (CDRCKGSG), 200–207 (CPECGGEG), and 214–221 (CSSCRGQG).

Belongs to the DnaJ family. As to quaternary structure, homodimer. It depends on Zn(2+) as a cofactor.

Its subcellular location is the cytoplasm. In terms of biological role, participates actively in the response to hyperosmotic and heat shock by preventing the aggregation of stress-denatured proteins and by disaggregating proteins, also in an autonomous, DnaK-independent fashion. Unfolded proteins bind initially to DnaJ; upon interaction with the DnaJ-bound protein, DnaK hydrolyzes its bound ATP, resulting in the formation of a stable complex. GrpE releases ADP from DnaK; ATP binding to DnaK triggers the release of the substrate protein, thus completing the reaction cycle. Several rounds of ATP-dependent interactions between DnaJ, DnaK and GrpE are required for fully efficient folding. Also involved, together with DnaK and GrpE, in the DNA replication of plasmids through activation of initiation proteins. The protein is Chaperone protein DnaJ of Chlamydia abortus (strain DSM 27085 / S26/3) (Chlamydophila abortus).